A 141-amino-acid polypeptide reads, in one-letter code: MTIKRFFVCAGIMGCLSLNPAMAEWTGDARDGMFSGVVITQFHTGQIDNKPYFCIEGKQSAGSSISACSMKNSSVWGASFSTLYNQALYFYTTGQPVRIYYKPGVWTYPPFVKALTSNALVGLSTCTTSTECFGPDRKKNS.

The first 23 residues, 1–23, serve as a signal peptide directing secretion; the sequence is MTIKRFFVCAGIMGCLSLNPAMA. Residues 33-35 and glutamine 59 contribute to the N-glycoloyl-alpha-neuraminate site; that span reads MFS. The segment at 89–94 is hydrophobic patch important for binding to SubA; that stretch reads YFYTTG. Residue tyrosine 101 participates in N-glycoloyl-alpha-neuraminate binding.

As to quaternary structure, forms a complex with SubA with the stoichiometry SubA1:SubB5 (called SubAB5). Each SubB subunit makes different contacts with the single SubA subunit. This subunit alone forms pentamers.

The protein resides in the secreted. It is found in the host cytoplasm. The protein localises to the host cytosol. Its subcellular location is the host endoplasmic reticulum lumen. Receptor-binding subunit of subtilase cytotoxin SubAB5. Required for receptor-binding and thus correct trafficking in the host cell. Has specificity for host glycans terminating in the sialic acid N-glycolyl-alpha-neuraminic acid (Neu5Gc); each subunit in the SubB pentamer binds one Neu5Gc. The protease subunit (SubA) cleaves host BiP/HSPA5, inducing the host endoplasmic reticulum stress response and eventual cell death. Culture supernatant of E.coli expressing both subA and subB are toxic for Vero cells (African green monkey kidney cell line), Chinese hamster ovary cells and Hct-8 cells (human colonic epithelial cell line); the subunits are not toxic individually. Purified SubAB5 is highly toxic, &lt;0.1 pg is able to kill at least 50% of 30'000 Vero cells in a microtiter plate assay after 3 days; no cytotoxicity is seen at 24 hours. Preabsorption with cells expressing a ganglioside GM2 mimic reduced cytotoxicity of SubAB5 by 93% in the Vero cytotoxicity assay. Intraperitoneal injection of 200 ng of purified SubAB5 kills mice; the higher the dose the faster the mice die. Animals injected with purified SubAB5 have microvascular thrombi in the brain and other organs, including the renal tubules and glomeruli. Mice fed E.coli cells expressing cloned SubAB5 experience drastic weight loss and appear ill and lethargic. SubB alone at 2.5 ug/ml causes vacuolation of Vero cells, which requires the V-type ATPase proton pump; treated cells die. Protein synthesis in Vero cells is transiently inhibited by SubAB5; both subunits are required for this effect. Inhibition of protein synthesis is prevented by brefeldin A; cells are arrested in the G1 phase. SubAB5 at 100 ng/ml induced caspase-dependent apoptosis in Vero cells through mitochondrial membrane damage. The polypeptide is Subtilase cytotoxin subunit B (Escherichia coli).